Reading from the N-terminus, the 311-residue chain is JNK1/MAPK8-associated membrane protein (311 aa).

The Lumenal segment spans residues 1–57 (MAVDIQPACLGLYCGKTLLFKNGSSEIYGECGVCPRGQRTNAQKYCQPCTESPELYD). The N-linked (GlcNAc...) asparagine glycan is linked to Asn22. The helical transmembrane segment at 58–78 (WLYLGFMAMLPLVLHWFFIEW) threads the bilayer. The Cytoplasmic segment spans residues 79–87 (YSGKKSSSA). The helical transmembrane segment at 88–108 (LFQHITALFECTMAAIITLLV) threads the bilayer. Over 109–149 (SDPVGVLYIRSCRVLMLSDWYTMLYNPSPDYVTTVHCTHEA) the chain is Lumenal. Residues 150–170 (VYPLYTIVFVYYAFCLVLMML) form a helical membrane-spanning segment. Over 171 to 188 (LRPLLVKKIACGLGKSDR) the chain is Cytoplasmic. Residues 189-209 (FKSIYAALYFFPILTVLQAVG) traverse the membrane as a helical segment. Gly210 is a topological domain (lumenal). A helical membrane pass occupies residues 211 to 231 (GLLYYAFPYIILVLSLVTLAV). At 232–250 (YMSASEIENCYDLLVRKKR) the chain is on the cytoplasmic side. The helical transmembrane segment at 251–271 (LIVLFSHWLLHAYGIVSISRV) threads the bilayer. Residues 272-277 (DRLEHD) lie on the Lumenal side of the membrane. Residues 278-298 (LPLLALVPTPALFYLFTAKFT) traverse the membrane as a helical segment. Residues 299-311 (EPSRILSEGANGH) are Cytoplasmic-facing.

As to quaternary structure, interacts with RNF5 and MAPK8, but not with MAPK9. Binding to MAPK8 occurs before and after exposure to stress, such as UV irradiation. After exposure to stress, interacts with phosphorylated MAPK8. Competes with DUSP10 for MAPK8 binding. Associates with multiple components of the proteasome and with ERAD regulatory proteins, including AMFR/GP78, CANX, PSMC1, PSMC2, PSMC3/TBP1, PSMC5, PSMC6, PSMD8, SEC61-ALPHA and UFD1. Ubiquitinated by RNF5 via 'Lys-63'-linked ubiquitin linkage in a UBE2N-dependent manner. Ubiquitination decreases association with components of the proteasome and ERAD. In terms of tissue distribution, expressed in numerous tissues, including brain, spleen, thymus, liver, kidney and testis.

The protein localises to the endoplasmic reticulum membrane. Functionally, regulates the duration of MAPK8 activity in response to various stress stimuli. Facilitates degradation of misfolded endoplasmic reticulum (ER) proteins through the recruitment of components of the proteasome and endoplasmic reticulum-associated degradation (ERAD) system. This chain is JNK1/MAPK8-associated membrane protein (Jkamp), found in Mus musculus (Mouse).